Consider the following 76-residue polypeptide: Sulfur carrier protein TusA (76 aa).

Cys14 (cysteine persulfide intermediate) is an active-site residue.

It belongs to the sulfur carrier protein TusA family. Interacts with IscS.

It is found in the cytoplasm. It participates in tRNA modification. Sulfur carrier protein involved in sulfur trafficking in the cell. Part of a sulfur-relay system required for 2-thiolation during synthesis of 2-thiouridine of the modified wobble base 5-methylaminomethyl-2-thiouridine (mnm(5)s(2)U) in tRNA. Interacts with IscS and stimulates its cysteine desulfurase activity. Accepts an activated sulfur from IscS, which is then transferred to TusD, and thus determines the direction of sulfur flow from IscS to 2-thiouridine formation. Also appears to be involved in sulfur transfer for the biosynthesis of molybdopterin. The sequence is that of Sulfur carrier protein TusA from Buchnera aphidicola subsp. Acyrthosiphon pisum (strain Tuc7).